A 440-amino-acid polypeptide reads, in one-letter code: Transposon Ty1-A Gag polyprotein (440 aa).

4 stretches are compositionally biased toward polar residues: residues 1-23, 48-60, 71-93, and 127-152; these read MESQ…SVTS, TKAN…TPAS, SPQT…MMTQ, and QSQF…GNTF. Disordered regions lie at residues 1-93, 126-173, and 352-440; these read MESQ…MMTQ, PQSQ…RPPP, and GSRN…PETY. The span at 153 to 165 shows a compositional bias: low complexity; sequence TDSSSADSDMTST. The segment at 299 to 401 is RNA-binding; the sequence is NNGIHINNKV…NSKSKTARAH (103 aa). Low complexity predominate over residues 402–418; that stretch reads NVSTSNNSPSTDNDSIS. Ser-416 is subject to Phosphoserine. The span at 419–428 shows a compositional bias: polar residues; that stretch reads KSTTEPIQLN. Over residues 429–440 the composition is skewed to basic and acidic residues; the sequence is NKHDLHLRPETY.

In terms of assembly, homotrimer.

It localises to the cytoplasm. Capsid protein (CA) is the structural component of the virus-like particle (VLP), forming the shell that encapsulates the retrotransposons dimeric RNA genome. The particles are assembled from trimer-clustered units and there are holes in the capsid shells that allow for the diffusion of macromolecules. CA also has nucleocapsid-like chaperone activity, promoting primer tRNA(i)-Met annealing to the multipartite primer-binding site (PBS), dimerization of Ty1 RNA and initiation of reverse transcription. In Saccharomyces cerevisiae (strain ATCC 204508 / S288c) (Baker's yeast), this protein is Transposon Ty1-A Gag polyprotein (TY1A-A).